The sequence spans 136 residues: Sec-independent protein translocase protein TatB (136 aa).

Residues Met1 to Gly21 traverse the membrane as a helical segment. The disordered stretch occupies residues Tyr89–Ser136. A compositionally biased stretch (polar residues) spans Thr99–Pro115. Basic and acidic residues predominate over residues Ser122–Ser136.

This sequence belongs to the TatB family. As to quaternary structure, the Tat system comprises two distinct complexes: a TatABC complex, containing multiple copies of TatA, TatB and TatC subunits, and a separate TatA complex, containing only TatA subunits. Substrates initially bind to the TatABC complex, which probably triggers association of the separate TatA complex to form the active translocon.

It is found in the cell inner membrane. Its function is as follows. Part of the twin-arginine translocation (Tat) system that transports large folded proteins containing a characteristic twin-arginine motif in their signal peptide across membranes. Together with TatC, TatB is part of a receptor directly interacting with Tat signal peptides. TatB may form an oligomeric binding site that transiently accommodates folded Tat precursor proteins before their translocation. The polypeptide is Sec-independent protein translocase protein TatB (Hahella chejuensis (strain KCTC 2396)).